Here is a 357-residue protein sequence, read N- to C-terminus: Enoyl-[acyl-carrier-protein] reductase, mitochondrial (357 aa).

A mitochondrion-targeting transit peptide spans 1–19; it reads MLRRGFLSRINAAQWSRQM. In terms of domain architecture, Enoyl reductase (ER) spans 36–352; that stretch reads EVLQLVEDKL…FKGFTGKKYI (317 aa). Y74 acts as the Proton donor in catalysis. NADP(+) contacts are provided by residues N147, 173 to 176, 196 to 198, 264 to 267, 289 to 291, K349, and K350; these read NSAV, RDR, YGGM, and FWM.

It belongs to the zinc-containing alcohol dehydrogenase family. Quinone oxidoreductase subfamily. In terms of assembly, homodimer. As to expression, expressed in the central nervous system.

It is found in the mitochondrion. It catalyses the reaction a 2,3-saturated acyl-[ACP] + NADP(+) = a (2E)-enoyl-[ACP] + NADPH + H(+). In terms of biological role, catalyzes the NADPH-dependent reduction of trans-2-enoyl thioesters in mitochondrial fatty acid synthesis (fatty acid synthesis type II). Fatty acid chain elongation in mitochondria uses acyl carrier protein (ACP) as an acyl group carrier, but the enzyme accepts both ACP and CoA thioesters as substrates in vitro. Involved in iron homeostasis; affecting Fe-S cluster assembly and ceramide metabolism. Required for proper morphology and bioenergetic functions of mitochondria. Required for maintenance of neurons, including photoreceptor neurons. In Drosophila melanogaster (Fruit fly), this protein is Enoyl-[acyl-carrier-protein] reductase, mitochondrial.